Here is a 110-residue protein sequence, read N- to C-terminus: UPF0060 membrane protein Swit_0423 (110 aa).

The next 4 helical transmembrane spans lie at 6–26, 29–49, 61–81, and 90–110; these read LFIFVAAALCEIGGCFAFWAW, LGKSPLWAVGGVGLLILFAWL, AFAAYGGIYICASLGWMWAVE, and LIGVLLCAVGSAVILLGPRTA.

It belongs to the UPF0060 family.

The protein localises to the cell inner membrane. This chain is UPF0060 membrane protein Swit_0423, found in Rhizorhabdus wittichii (strain DSM 6014 / CCUG 31198 / JCM 15750 / NBRC 105917 / EY 4224 / RW1) (Sphingomonas wittichii).